The primary structure comprises 323 residues: Mycothiol acetyltransferase (323 aa).

2 consecutive N-acetyltransferase domains span residues 21–176 (ELLR…VSLR) and 173–323 (VSLR…LTKN). Glu-44 contributes to the 1D-myo-inositol 2-(L-cysteinylamino)-2-deoxy-alpha-D-glucopyranoside binding site. 98–100 (LAV) is a binding site for acetyl-CoA. 1D-myo-inositol 2-(L-cysteinylamino)-2-deoxy-alpha-D-glucopyranoside-binding residues include Glu-200, Lys-240, and Glu-253. Residues 257-259 (VGV) and 264-270 (QGLGLGK) each bind acetyl-CoA. 1D-myo-inositol 2-(L-cysteinylamino)-2-deoxy-alpha-D-glucopyranoside is bound at residue Tyr-291.

It belongs to the acetyltransferase family. MshD subfamily. As to quaternary structure, monomer.

It catalyses the reaction 1D-myo-inositol 2-(L-cysteinylamino)-2-deoxy-alpha-D-glucopyranoside + acetyl-CoA = mycothiol + CoA + H(+). Its function is as follows. Catalyzes the transfer of acetyl from acetyl-CoA to desacetylmycothiol (Cys-GlcN-Ins) to form mycothiol. The protein is Mycothiol acetyltransferase of Paenarthrobacter aurescens (strain TC1).